We begin with the raw amino-acid sequence, 355 residues long: F-box only protein 32 (355 aa).

The short motif at 62–67 (KKRKKD) is the Nuclear localization signal element. Residues 169–173 (LLQTL) carry the Nuclear export signal motif. The F-box domain maps to 223–271 (LTITDLPVCLQLNIMQRLSDGRDLVSLGQAAPDLHVLSEDRLLWKRLCQ). The Bipartite nuclear localization signal motif lies at 280–295 (RKRLILSDKGQLDWKK).

As to quaternary structure, part of the SCF (SKP1-CUL1-F-box) E3 ubiquitin-protein ligase complex SCF(FBXO32) formed of CUL1, SKP1, RBX1 and FBXO32. Specifically expressed in cardiac and skeletal muscle.

Its subcellular location is the cytoplasm. It localises to the nucleus. It functions in the pathway protein modification; protein ubiquitination. Its function is as follows. Substrate recognition component of a SCF (SKP1-CUL1-F-box protein) E3 ubiquitin-protein ligase complex which mediates the ubiquitination and subsequent proteasomal degradation of target proteins. Probably recognizes and binds to phosphorylated target proteins during skeletal muscle atrophy. Recognizes TERF1. The polypeptide is F-box only protein 32 (Fbxo32) (Mus musculus (Mouse)).